A 100-amino-acid polypeptide reads, in one-letter code: Putative membrane protein insertion efficiency factor (100 aa).

The interval 73-100 (DPVPDLPGSAPEENGRPSPDGQHSGSGG) is disordered.

This sequence belongs to the UPF0161 family.

The protein localises to the cell inner membrane. Its function is as follows. Could be involved in insertion of integral membrane proteins into the membrane. In Synechococcus sp. (strain JA-3-3Ab) (Cyanobacteria bacterium Yellowstone A-Prime), this protein is Putative membrane protein insertion efficiency factor.